A 394-amino-acid polypeptide reads, in one-letter code: Protein arginine N-methyltransferase 8 (394 aa).

A lipid anchor (N-myristoyl glycine) is attached at G2. A disordered region spans residues 21–40 (VESTEVSSAPPQPPQPVIPA). 2 short sequence motifs (SH3-binding) span residues 29 to 42 (APPQ…PAKP) and 53 to 58 (PSCPGR). Positions 30 to 39 (PPQPPQPVIP) are enriched in pro residues. R58 carries the post-translational modification Omega-N-methylarginine; by PRMT8. R73 is subject to Asymmetric dimethylarginine; by PRMT8. An SAM-dependent MTase PRMT-type domain is found at 73–394 (RDYYFDSYAH…TSVSNDYKMR (322 aa)). S-adenosyl-L-methionine-binding positions include H86, R95, G119, 119 to 122 (GSGT), E141, and E170. Residues E185 and E194 contribute to the active site.

The protein belongs to the class I-like SAM-binding methyltransferase superfamily. Protein arginine N-methyltransferase family. PRMT8 subfamily. In terms of assembly, homodimer. Tetramer; individual homodimers associates to form a homotetramer. Homooctamer; individual homodimers associates to form a homooctamer and homooligomerization is required for proper localization to the cell membrane. Heterodimer with PRMT1; heterodimerization may recruit PRMT1 activity to the plasma membrane. Interacts with PRMT2 (via the SH3 domain). Interacts with FYN (via the SH3 domain). Interacts with EWS; independently of EWS methylation status. As to expression, brain-specific. Only expressed in neurons, especially in the somatosensory and limbic systems, and a part of motor system. Highly expressed in all of the regions related to general somatosensory system. Expressed in most of the relay nuclei intervening the special somatosensory system, such as the auditory, visual and vestibular systems. Also present in forebrain limbic areas and thalamic nuclei relevant to limbic areas and in areas related to the motor system, such as the caudate putamen, Purkinje cells, inferior olivary nucleus and cerebellar nuclei.

The protein localises to the cell membrane. It carries out the reaction L-arginyl-[protein] + S-adenosyl-L-methionine = N(omega)-methyl-L-arginyl-[protein] + S-adenosyl-L-homocysteine + H(+). The catalysed reaction is L-arginyl-[protein] + 2 S-adenosyl-L-methionine = N(omega),N(omega)-dimethyl-L-arginyl-[protein] + 2 S-adenosyl-L-homocysteine + 2 H(+). S-adenosyl-L-methionine-dependent and membrane-associated arginine methyltransferase that can both catalyze the formation of omega-N monomethylarginine (MMA) and asymmetrical dimethylarginine (aDMA) in proteins such as NIFK, myelin basic protein, histone H4, H2A and H2A/H2B dimer. Able to mono- and dimethylate EWS protein; however its precise role toward EWS remains unclear as it still interacts with fully methylated EWS. The chain is Protein arginine N-methyltransferase 8 from Mus musculus (Mouse).